Consider the following 715-residue polypeptide: PKTFGITSPISLAAAKDTDCTLMQKLIETLKPYGVFEEEEQLQHRILGKLNNLVKEWIREISELKHLPQSVIENVGGKIFTFGPYRLGVHTKGADIDALCVAPRHVDRSDFFSSFYDKLKQQEEVKDLRSVEEAFVPVIKLCFDGIEIDILFARLALQTIPEDLDLRDDSLLKNLDIRCIRSLNGCRVTDEILHLVPNIDSFRLTLRAIKLWAKRHNIYSNILGFLGGVSWAMLVARTCQLYPNAIASTLVHKFFLVFSKWEWPNPVLLKQPEECNLNLPVWDPRVNPSDRYHLMPIITPAYPQQNSTYNVSVSTRAVMIEEFKQGLAITDEILLGKAEWSKLFDAPNFFQKYKHYILLLASAPTEKQRLEWVGLVESKIRILVGSLEKNEFITLAHVNPRSFPAPSENMEKEEFRTMWVIGLVFKKMENSENLSVDLTYDIQSFTDTVDRQAINSKMFETEMKIAAMHVKRKQLHQLQPSHVSPKKKKHSFEGVKLLSLNDSSIDLSVDSDNSMSVPSPTNATRTSPLNSSGLSQGNSPAAPVSFSVTNVQATDVMVPQNNSTENLGGSLNESIPESATHPGFSSTPKPLVTRVVSSMRLVNQLQKPVSNTITKMPSPVAGVKRTSSPSNEDSPKKNKTEEDENDSSISADVDDQNKLETEELKEVHSEEKSSSPVPGSLPFSQQSSTDLSDISVVPATPIPVIKNSIKLRLNR.

Residues 82–84 (FGP), threonine 91, 95–97 (DID), aspartate 149, lysine 210, tyrosine 219, and 228–229 (GV) each bind ATP. Mg(2+) is bound by residues aspartate 95, aspartate 97, and aspartate 149. A Nuclear localization signal 1 motif is present at residues 472–489 (RKQLHQLQPSHVSPKKKK). 3 disordered regions span residues 510-543 (DSDNSMSVPSPTNATRTSPLNSSGLSQGNSPAAP), 560-590 (QNNSTENLGGSLNESIPESATHPGFSSTPKP), and 607-693 (KPVS…DLSD). 2 stretches are compositionally biased toward polar residues: residues 515–539 (MSVPSPTNATRTSPLNSSGLSQGNS) and 560–588 (QNNSTENLGGSLNESIPESATHPGFSSTP). A Nuclear localization signal 2 motif is present at residues 624-639 (KRTSSPSNEDSPKKNK). The segment covering 655–673 (DQNKLETEELKEVHSEEKS) has biased composition (basic and acidic residues). Residues 674–692 (SSPVPGSLPFSQQSSTDLS) show a composition bias toward polar residues.

Belongs to the poly(A) polymerase family. In terms of assembly, monomer. Mg(2+) is required as a cofactor. It depends on Mn(2+) as a cofactor.

It is found in the nucleus. It catalyses the reaction RNA(n) + ATP = RNA(n)-3'-adenine ribonucleotide + diphosphate. Functionally, polymerase that creates the 3'-poly(A) tail of mRNA's. May acquire specificity through interaction with a cleavage and polyadenylation factor (CPSF). This Xenopus laevis (African clawed frog) protein is Poly(A) polymerase alpha-A (papola-a).